Reading from the N-terminus, the 639-residue chain is 3-oxocholoyl-CoA 4-desaturase (639 aa).

Residue Gln101 coordinates FMN. Position 155–158 (155–158 (HAAH)) interacts with substrate. Catalysis depends on Tyr160, which acts as the Proton donor. FMN-binding positions include Arg208, Arg286, and 308–309 (GR). Residues Cys332 and Cys335 each contribute to the [4Fe-4S] cluster site. Gln337 serves as a coordination point for FAD. [4Fe-4S] cluster-binding residues include Cys339 and Cys353. FAD contacts are provided by Ala383, Glu402, Gln410, Lys420, and Val447.

This sequence in the N-terminal section; belongs to the NADH:flavin oxidoreductase/NADH oxidase family. The cofactor is FMN. FAD serves as cofactor. Requires [4Fe-4S] cluster as cofactor.

The catalysed reaction is 7alpha,12alpha-dihydroxy-3-oxochol-24-oyl-CoA + NAD(+) = 7alpha,12alpha-dihydroxy-3-oxochol-4-en-24-oyl-CoA + NADH + H(+). It carries out the reaction 7alpha-hydroxy-3-oxochol-24-oyl-CoA + NAD(+) = 7alpha-hydroxy-3-oxochol-4-en-24-oyl-CoA + NADH + H(+). It participates in lipid metabolism; bile acid degradation. Its function is as follows. Stereo-specific NAD(H)-dependent 3-oxo-delta4-cholenoic acid oxidoreductase involved in bile acid 7alpha-dehydroxylation. The polypeptide is 3-oxocholoyl-CoA 4-desaturase (Clostridium scindens (strain JCM 10418 / VPI 12708)).